A 282-amino-acid chain; its full sequence is Undecaprenyl-diphosphatase (282 aa).

The next 6 membrane-spanning stretches (helical) occupy residues 90 to 110 (YRLGWYVIIGTIPICVMGLLF), 121 to 141 (LWVVATALVVFSGVIALAEYL), 165 to 185 (LALVPGVSRSGSTISAGLFLG), 194 to 214 (FGFLLAIPAVFASGLFSLPDA), 228 to 248 (QLLVATLIAFVVGLAAVSWFL), and 256 to 276 (MYWFVGYRVVVGVVVLILLAT).

The protein belongs to the UppP family.

Its subcellular location is the cell membrane. The catalysed reaction is di-trans,octa-cis-undecaprenyl diphosphate + H2O = di-trans,octa-cis-undecaprenyl phosphate + phosphate + H(+). Its function is as follows. Catalyzes the dephosphorylation of undecaprenyl diphosphate (UPP). Confers resistance to bacitracin. In Mycobacterium marinum (strain ATCC BAA-535 / M), this protein is Undecaprenyl-diphosphatase.